The primary structure comprises 70 residues: Kappa-scoloptoxin(07)-Ssm2b (70 aa).

Positions 1–19 (MLVFYALLFVSVFSSTVMG) are cleaved as a signal peptide. The propeptide occupies 20-39 (ATIDKPILREAIEEIDVNKR).

It belongs to the scoloptoxin-07 family. Post-translationally, contains 3 disulfide bonds. Expressed by the venom gland.

The protein resides in the secreted. Inhibits voltage-gated potassium channels. This chain is Kappa-scoloptoxin(07)-Ssm2b, found in Scolopendra mutilans (Chinese red-headed centipede).